A 599-amino-acid chain; its full sequence is NTPase KAP family P-loop domain-containing protein 1 (599 aa).

The region spanning methionine 1–leucine 416 is the KAP NTPase domain. 3 consecutive transmembrane segments (helical) span residues glycine 25–leucine 45, valine 119–leucine 139, and alanine 156–valine 176. The segment at alanine 543–alanine 599 is disordered. Residues histidine 579–histidine 591 show a composition bias toward basic and acidic residues.

The protein resides in the membrane. This Mus musculus (Mouse) protein is NTPase KAP family P-loop domain-containing protein 1 (Nkpd1).